A 225-amino-acid chain; its full sequence is Rho GDP-dissociation inhibitor 3 (225 aa).

The protein belongs to the Rho GDI family. In terms of tissue distribution, primarily expressed in pancreas and brain.

The protein localises to the cytoplasm. Functionally, inhibits GDP/GTP exchange reaction of RhoB. Interacts specifically with the GDP- and GTP-bound forms of post-translationally processed Rhob and Rhog proteins, both of which show a growth-regulated expression in mammalian cells. Stimulates the release of the GDP-bound but not the GTP-bound RhoB protein. Also inhibits the GDP/GTP exchange of RhoB but shows less ability to inhibit the dissociation of prebound GTP. In Homo sapiens (Human), this protein is Rho GDP-dissociation inhibitor 3 (ARHGDIG).